We begin with the raw amino-acid sequence, 813 residues long: Raf homolog serine/threonine-protein kinase (813 aa).

Residues 1–79 (MSRINFKKSS…GGAGTSDKEP (79 aa)) are disordered. Low complexity predominate over residues 9-23 (SSASTTPTSPHCPSP). Positions 85 to 161 (KMIMVHLPFD…PGNELWVHSE (77 aa)) constitute an RBD domain. A Phorbol-ester/DAG-type zinc finger spans residues 170–217 (KHAIVRRTFIPPKSCDVCNNPIWMMGFRCEFCQFKFHQRCSSFAPLYC). The Zn(2+) site is built by Cys-184, Cys-187, Cys-198, Cys-201, His-206, Cys-209, and Cys-217. Composition is skewed to polar residues over residues 258–273 (TSGQ…SHPD) and 291–301 (SPQNETSQLSP). 3 disordered regions span residues 258 to 315 (TSGQ…SAPN), 338 to 358 (QRLE…QARH), and 383 to 472 (TPLG…PHHE). Over residues 338–348 (QRLEEESRDKT) the composition is skewed to basic and acidic residues. Over residues 386-399 (GSNSPSSTCSSPPG) the composition is skewed to low complexity. A compositionally biased stretch (polar residues) spans 406 to 421 (TLGQSPNVSGSTTSSL). The span at 453–462 (SPGERLDAQR) shows a compositional bias: basic and acidic residues. Positions 481–748 (FIIQYKVGSG…VLERLRDIIL (268 aa)) constitute a Protein kinase domain. ATP contacts are provided by residues 487–495 (VGSGSFGTV) and Lys-507. Asp-602 serves as the catalytic Proton acceptor.

It belongs to the protein kinase superfamily. TKL Ser/Thr protein kinase family. RAF subfamily. In terms of assembly, interacts with cdf-1 in a zinc-dependent manner which promotes its activity. Zn(2+) serves as cofactor.

It carries out the reaction L-seryl-[protein] + ATP = O-phospho-L-seryl-[protein] + ADP + H(+). The enzyme catalyses L-threonyl-[protein] + ATP = O-phospho-L-threonyl-[protein] + ADP + H(+). Its function is as follows. Protein kinase that participates in the induction of vulva and has roles in fertility and viability. Acts downstream of the Ras protein let-60. Required for progression of developing oocytes through the pachytene stage. Plays a role in responses to M.nematophilum-mediated bacterial infection by promoting tail swelling and preventing constipation. Positively regulates lifespan upstream of mek-2 and mpk-1. The chain is Raf homolog serine/threonine-protein kinase (lin-45) from Caenorhabditis elegans.